Consider the following 37-residue polypeptide: Large ribosomal subunit protein bL36 (37 aa).

This sequence belongs to the bacterial ribosomal protein bL36 family.

This Alkalilimnicola ehrlichii (strain ATCC BAA-1101 / DSM 17681 / MLHE-1) protein is Large ribosomal subunit protein bL36.